A 243-amino-acid chain; its full sequence is Aspartate/glutamate leucyltransferase (243 aa).

The protein belongs to the R-transferase family. Bpt subfamily.

The protein resides in the cytoplasm. It catalyses the reaction N-terminal L-glutamyl-[protein] + L-leucyl-tRNA(Leu) = N-terminal L-leucyl-L-glutamyl-[protein] + tRNA(Leu) + H(+). The enzyme catalyses N-terminal L-aspartyl-[protein] + L-leucyl-tRNA(Leu) = N-terminal L-leucyl-L-aspartyl-[protein] + tRNA(Leu) + H(+). Its function is as follows. Functions in the N-end rule pathway of protein degradation where it conjugates Leu from its aminoacyl-tRNA to the N-termini of proteins containing an N-terminal aspartate or glutamate. This chain is Aspartate/glutamate leucyltransferase, found in Teredinibacter turnerae (strain ATCC 39867 / T7901).